Reading from the N-terminus, the 243-residue chain is Adenosylcobinamide-GDP ribazoletransferase (243 aa).

The next 6 helical transmembrane spans lie at 33–53 (FLPVIGLLIGILMYLPTLLAP), 59–79 (IIIVSIWALYFLITGGLHIDG), 105–125 (IGAFGVLGILWLLILNLTLAY), 127–147 (TENMLLLLVPVVGRASAVFAA), 172–192 (VISIAFSLLLGSMVSIKGAII), and 223–243 (TIEISQTLFMLSAYLLKSIII).

It belongs to the CobS family. It depends on Mg(2+) as a cofactor.

It localises to the cell membrane. The enzyme catalyses alpha-ribazole + adenosylcob(III)inamide-GDP = adenosylcob(III)alamin + GMP + H(+). It catalyses the reaction alpha-ribazole 5'-phosphate + adenosylcob(III)inamide-GDP = adenosylcob(III)alamin 5'-phosphate + GMP + H(+). Its pathway is cofactor biosynthesis; adenosylcobalamin biosynthesis; adenosylcobalamin from cob(II)yrinate a,c-diamide: step 7/7. Functionally, joins adenosylcobinamide-GDP and alpha-ribazole to generate adenosylcobalamin (Ado-cobalamin). Also synthesizes adenosylcobalamin 5'-phosphate from adenosylcobinamide-GDP and alpha-ribazole 5'-phosphate. The protein is Adenosylcobinamide-GDP ribazoletransferase of Alkaliphilus oremlandii (strain OhILAs) (Clostridium oremlandii (strain OhILAs)).